An 83-amino-acid polypeptide reads, in one-letter code: Apolipoprotein C-I (83 aa).

The N-terminal stretch at Met-1–Gly-26 is a signal peptide.

The protein belongs to the apolipoprotein C1 family. Synthesized mainly in liver and to a minor degree in intestine. Also found in the lung and spleen.

It localises to the secreted. Inhibitor of lipoprotein binding to the low density lipoprotein (LDL) receptor, LDL receptor-related protein, and very low density lipoprotein (VLDL) receptor. Associates with high density lipoproteins (HDL) and the triacylglycerol-rich lipoproteins in the plasma and makes up about 10% of the protein of the VLDL and 2% of that of HDL. Appears to interfere directly with fatty acid uptake and is also the major plasma inhibitor of cholesteryl ester transfer protein (CETP). Binds free fatty acids and reduces their intracellular esterification. Modulates the interaction of APOE with beta-migrating VLDL and inhibits binding of beta-VLDL to the LDL receptor-related protein. In Homo sapiens (Human), this protein is Apolipoprotein C-I (APOC1).